A 483-amino-acid chain; its full sequence is Islet cell autoantigen 1 (483 aa).

Positions 51–254 (ASDADLDAKL…TSHTMAAIHE (204 aa)) constitute an AH domain. Residues 281–321 (EEKKKINQQESTDAAVQEPSQLISLEEENQRKESSSFKTED) form a disordered region. The span at 288 to 303 (QQESTDAAVQEPSQLI) shows a compositional bias: polar residues. A compositionally biased stretch (basic and acidic residues) spans 308–321 (ENQRKESSSFKTED).

In terms of tissue distribution, expressed abundantly in pancreas, heart and brain with low levels of expression in lung, kidney, liver and thyroid.

It is found in the cytoplasm. The protein localises to the cytosol. Its subcellular location is the golgi apparatus membrane. It localises to the cytoplasmic vesicle. The protein resides in the secretory vesicle membrane. It is found in the secretory vesicle. The protein localises to the synaptic vesicle membrane. May play a role in neurotransmitter secretion. This is Islet cell autoantigen 1 (ICA1) from Homo sapiens (Human).